The sequence spans 246 residues: Glucosamine-6-phosphate deaminase (246 aa).

Aspartate 67 (proton acceptor; for enolization step) is an active-site residue. Asparagine 136 acts as the For ring-opening step in catalysis. The active-site Proton acceptor; for ring-opening step is histidine 138. Residue glutamate 143 is the For ring-opening step of the active site.

The protein belongs to the glucosamine/galactosamine-6-phosphate isomerase family. NagB subfamily.

The catalysed reaction is alpha-D-glucosamine 6-phosphate + H2O = beta-D-fructose 6-phosphate + NH4(+). The protein operates within amino-sugar metabolism; N-acetylneuraminate degradation; D-fructose 6-phosphate from N-acetylneuraminate: step 5/5. Functionally, catalyzes the reversible isomerization-deamination of glucosamine 6-phosphate (GlcN6P) to form fructose 6-phosphate (Fru6P) and ammonium ion. The polypeptide is Glucosamine-6-phosphate deaminase (Halalkalibacterium halodurans (strain ATCC BAA-125 / DSM 18197 / FERM 7344 / JCM 9153 / C-125) (Bacillus halodurans)).